We begin with the raw amino-acid sequence, 239 residues long: EF-hand domain-containing protein D2 (239 aa).

Residues 1 to 51 (MATDELASKLSRRLQMEDEGGEATEQPGLNGAAAAAAEAPDETAQALGSAD) are disordered. Ala-2 bears the N-acetylalanine mark. A Phosphoserine modification is found at Ser-11. The segment covering 32 to 46 (AAAAAAEAPDETAQA) has biased composition (low complexity). A phosphoserine mark is found at Ser-73 and Ser-75. Tyr-82 is modified (phosphotyrosine). EF-hand domains lie at 91–126 (KQIK…LGAP) and 127–162 (QTHL…AAAG). Positions 104, 108, 115, 140, 142, 144, 146, and 151 each coordinate Ca(2+). Lys-232 carries the post-translational modification N6-acetyllysine.

Interacts with CASP9; with inactive form.

Its subcellular location is the membrane raft. Functionally, may regulate B-cell receptor (BCR)-induced immature and primary B-cell apoptosis. Plays a role as negative regulator of the canonical NF-kappa-B-activating branch. Controls spontaneous apoptosis through the regulation of BCL2L1 abundance. In Rattus norvegicus (Rat), this protein is EF-hand domain-containing protein D2 (Efhd2).